Consider the following 351-residue polypeptide: Phenoloxidase-activating factor 3 (351 aa).

The N-terminal stretch at 1–19 (MWLSLVILGVASAIVNVST) is a signal peptide. The N-linked (GlcNAc...) asparagine glycan is linked to N16. One can recognise a Clip domain in the interval 22-73 (SCTTPNGETATCLPIESCKIFWDYVVTSGADPEINSFLRASLCRQGNYVVCC). Disulfide bonds link C23–C72, C33–C64, C39–C73, C89–C224, C127–C143, C167–C176, C268–C285, and C295–C326. Residues 97 to 350 (VLGGEDTDLG…HLDWIKQNVR (254 aa)) form the Peptidase S1 domain. H142 acts as the Charge relay system in catalysis. Residues E158, D160, A163, and D166 each contribute to the Ca(2+) site. The active-site Charge relay system is the D204. S299 (charge relay system) is an active-site residue.

This sequence belongs to the peptidase S1 family. CLIP subfamily. In terms of assembly, in the active form, heterodimer of a light chain and a heavy chain; disulfide-linked. Post-translationally, proteolytically cleaved.

The protein localises to the secreted. With respect to regulation, cleavage of PPAF2 is Ca(2+)-independent. Inhibited by heparin. In terms of biological role, serine endopeptidase which, by cleaving prophenoloxidase activating factor PPAF2, is required for the activation of the prophenoloxidase cascade probably following the recognition of pathogen-derived products. The protein is Phenoloxidase-activating factor 3 of Holotrichia diomphalia (Korean black chafer).